The sequence spans 98 residues: NADH-ubiquinone oxidoreductase chain 4L (98 aa).

The next 3 membrane-spanning stretches (helical) occupy residues 1–21 (MSMVYFNIFMAFTVSLVGLLM), 29–49 (SLLCLEGMMLSLFVLMSMTIL), and 61–81 (IILLVFAACEAALGLSLLVMV).

The protein belongs to the complex I subunit 4L family. Core subunit of respiratory chain NADH dehydrogenase (Complex I) which is composed of 45 different subunits.

The protein localises to the mitochondrion inner membrane. It catalyses the reaction a ubiquinone + NADH + 5 H(+)(in) = a ubiquinol + NAD(+) + 4 H(+)(out). Core subunit of the mitochondrial membrane respiratory chain NADH dehydrogenase (Complex I) which catalyzes electron transfer from NADH through the respiratory chain, using ubiquinone as an electron acceptor. Part of the enzyme membrane arm which is embedded in the lipid bilayer and involved in proton translocation. The chain is NADH-ubiquinone oxidoreductase chain 4L (MT-ND4L) from Otaria byronia (South American sea lion).